We begin with the raw amino-acid sequence, 343 residues long: Anthranilate phosphoribosyltransferase (343 aa).

Residues Gly-84, 87–88 (GD), Thr-92, 94–97 (NIST), 112–120 (KHGNRGVSS), and Ser-124 contribute to the 5-phospho-alpha-D-ribose 1-diphosphate site. An anthranilate-binding site is contributed by Gly-84. Position 96 (Ser-96) interacts with Mg(2+). Asn-115 is an anthranilate binding site. Residue Arg-170 coordinates anthranilate. Positions 229 and 230 each coordinate Mg(2+).

It belongs to the anthranilate phosphoribosyltransferase family. As to quaternary structure, homodimer. It depends on Mg(2+) as a cofactor.

It carries out the reaction N-(5-phospho-beta-D-ribosyl)anthranilate + diphosphate = 5-phospho-alpha-D-ribose 1-diphosphate + anthranilate. It functions in the pathway amino-acid biosynthesis; L-tryptophan biosynthesis; L-tryptophan from chorismate: step 2/5. Catalyzes the transfer of the phosphoribosyl group of 5-phosphorylribose-1-pyrophosphate (PRPP) to anthranilate to yield N-(5'-phosphoribosyl)-anthranilate (PRA). This is Anthranilate phosphoribosyltransferase from Burkholderia orbicola (strain AU 1054).